The following is a 399-amino-acid chain: Probable dual-specificity RNA methyltransferase RlmN (399 aa).

E97 serves as the catalytic Proton acceptor. In terms of domain architecture, Radical SAM core spans 103 to 381 (YPDRATVCVS…CTVRVERGVS (279 aa)). A disulfide bridge links C110 with C386. Residues C117, C121, and C124 each contribute to the [4Fe-4S] cluster site. S-adenosyl-L-methionine-binding positions include 203–204 (GE), S235, 258–260 (SLH), and N343. C386 serves as the catalytic S-methylcysteine intermediate.

It belongs to the radical SAM superfamily. RlmN family. It depends on [4Fe-4S] cluster as a cofactor.

Its subcellular location is the cytoplasm. It catalyses the reaction adenosine(2503) in 23S rRNA + 2 reduced [2Fe-2S]-[ferredoxin] + 2 S-adenosyl-L-methionine = 2-methyladenosine(2503) in 23S rRNA + 5'-deoxyadenosine + L-methionine + 2 oxidized [2Fe-2S]-[ferredoxin] + S-adenosyl-L-homocysteine. It carries out the reaction adenosine(37) in tRNA + 2 reduced [2Fe-2S]-[ferredoxin] + 2 S-adenosyl-L-methionine = 2-methyladenosine(37) in tRNA + 5'-deoxyadenosine + L-methionine + 2 oxidized [2Fe-2S]-[ferredoxin] + S-adenosyl-L-homocysteine. Functionally, specifically methylates position 2 of adenine 2503 in 23S rRNA and position 2 of adenine 37 in tRNAs. In Roseiflexus sp. (strain RS-1), this protein is Probable dual-specificity RNA methyltransferase RlmN.